A 166-amino-acid polypeptide reads, in one-letter code: Putative peptidyl-prolyl cis-trans isomerase dodo (166 aa).

Residues 5–39 (EQLPDGWEKRTSRSTGMSYYLNMYTKESQWDQPTE) form the WW domain. A disordered region spans residues 32–53 (SQWDQPTEPAKKAGGGSAGGGD). Gly residues predominate over residues 44-53 (AGGGSAGGGD). The PpiC domain maps to 55–166 (PDEVHCLHLL…SGLHIILRKA (112 aa)).

It carries out the reaction [protein]-peptidylproline (omega=180) = [protein]-peptidylproline (omega=0). This Drosophila melanogaster (Fruit fly) protein is Putative peptidyl-prolyl cis-trans isomerase dodo (dod).